Here is a 355-residue protein sequence, read N- to C-terminus: Putative GPI-anchor transamidase (355 aa).

The signal sequence occupies residues 1–24 (MFNIMLVKFVVIFALILASCRVEA). Residues His165 and Cys207 contribute to the active site.

Belongs to the peptidase C13 family.

It functions in the pathway glycolipid biosynthesis; glycosylphosphatidylinositol-anchor biosynthesis. Its function is as follows. Mediates GPI anchoring in the endoplasmic reticulum, by replacing a protein's C-terminal GPI attachment signal peptide with a pre-assembled GPI. During this transamidation reaction, the GPI transamidase forms a carbonyl intermediate with the substrate protein. In Drosophila melanogaster (Fruit fly), this protein is Putative GPI-anchor transamidase.